The following is a 731-amino-acid chain: ARS-binding factor 1 (731 aa).

A Glycyl lysine isopeptide (Lys-Gly) (interchain with G-Cter in ubiquitin) cross-link involves residue K18. Composition is skewed to low complexity over residues 84–99 and 111–129; these read ASSE…NTNP and NNMN…NKVS. 4 disordered regions span residues 84–132, 146–227, 251–308, and 439–463; these read ASSE…SNDS, ANTH…DDVH, VANV…PSSI, and YNDL…GTNL. The segment covering 149–161 has biased composition (basic and acidic residues); that stretch reads HPDDTNDKVESRS. Polar residues predominate over residues 177–186; sequence IFKQQGVTIK. Phosphothreonine is present on T189. A Phosphoserine modification is found at S193. Composition is skewed to low complexity over residues 270 to 308 and 445 to 454; these read TNNN…PSSI and SSSSNNNNNN. At S467 the chain carries Phosphoserine. Positions 475 to 539 are disordered; it reads EISSAGTSSN…PSVNKWSKPD (65 aa). Positions 481–510 are enriched in low complexity; that stretch reads TSSNTTKNVNNNKNDSNDDNNGNNNNDASN. Phosphoserine occurs at positions 554 and 618. 2 disordered regions span residues 590–643 and 687–731; these read RSID…DDKL and KNTT…LRGQ. A Phosphoserine; by PKC modification is found at S624. C-terminal sequence stretches follow at residues 624–628 and 639–662; these read SKRQH and EDDK…KEVE. A compositionally biased stretch (basic and acidic residues) spans 634–643; it reads LEERNEDDKL. The segment covering 689-698 has biased composition (basic residues); sequence TTHHNNHHSQ. S720 carries the phosphoserine; by CK2 modification.

It belongs to the BAF1 family. In terms of assembly, component of the global genome repair (GGR) complex composed of at least ABF1, RAD7 and RAD16. Interacts with PSE1. In terms of processing, extensively phosphorylated on Ser and Thr residues.

It is found in the nucleus. Its function is as follows. General regulatory factor (GRF) that contributes to transcriptional activation of a large number of genes, as well as to DNA replication, silencing and telomere structure. Involved in the transcription activation of a subset of ribosomal protein genes. Binds the ARS-elements found in many promoters. Binds to the sequence 5'-TCN(7)ACG-3'. Influences on genome-wide nucleosome occupancy and affects chromatin structure, and probably dynamics. As a component of the global genome repair (GGR) complex, promotes global genome nucleotide excision repair (GG-NER) which removes DNA damage from nontranscribing DNA. Component of the regulatory network controlling mitotic and meiotic cell cycle progression. The polypeptide is ARS-binding factor 1 (ABF1) (Saccharomyces cerevisiae (strain ATCC 204508 / S288c) (Baker's yeast)).